A 446-amino-acid polypeptide reads, in one-letter code: Protein IQ-DOMAIN 19 (446 aa).

The tract at residues 93 to 140 (IPGTPKEKRRWSFRRSSATGPPPPACAITLKDSPPPPPPPPPPPPLQQ) is disordered. Residues 125-139 (SPPPPPPPPPPPPLQ) show a composition bias toward pro residues. IQ domains follow at residues 163-191 (EEFA…GLVK) and 192-214 (LQAL…CMQA). A calmodulin-binding region spans residues 214–231 (ALITLQAKAREQRIRMIG). Residues 332–345 (QSSKAKARSQSAPK) are compositionally biased toward low complexity. A disordered region spans residues 332–398 (QSSKAKARSQ…TAKESQQHHH (67 aa)). Polar residues predominate over residues 379–392 (QRSSSQLGSNTAKE).

This sequence belongs to the IQD family. As to quaternary structure, binds to multiple calmodulin (CaM) in the presence of Ca(2+) and CaM-like proteins.

It localises to the cytoplasm. Its subcellular location is the cytoskeleton. The protein resides in the cell membrane. Functionally, may be involved in cooperative interactions with calmodulins or calmodulin-like proteins. Recruits calmodulin proteins to microtubules, thus being a potential scaffold in cellular signaling and trafficking. Acts as a positive regulator of trichome branch initiation. May associate with nucleic acids and regulate gene expression at the transcriptional or post-transcriptional level. The chain is Protein IQ-DOMAIN 19 from Arabidopsis thaliana (Mouse-ear cress).